Here is a 90-residue protein sequence, read N- to C-terminus: Large ribosomal subunit protein bL27 (90 aa).

The tract at residues 1-20 is disordered; sequence MAHKKAGGSSRNGRDSAGKR.

This sequence belongs to the bacterial ribosomal protein bL27 family.

This chain is Large ribosomal subunit protein bL27, found in Rhodopseudomonas palustris (strain BisB18).